A 134-amino-acid chain; its full sequence is Holo-[acyl-carrier-protein] synthase (134 aa).

Aspartate 8 and glutamate 57 together coordinate Mg(2+).

The protein belongs to the P-Pant transferase superfamily. AcpS family. The cofactor is Mg(2+).

It localises to the cytoplasm. It carries out the reaction apo-[ACP] + CoA = holo-[ACP] + adenosine 3',5'-bisphosphate + H(+). In terms of biological role, transfers the 4'-phosphopantetheine moiety from coenzyme A to a Ser of acyl-carrier-protein. The sequence is that of Holo-[acyl-carrier-protein] synthase from Brucella abortus (strain S19).